Reading from the N-terminus, the 101-residue chain is Small ribosomal subunit protein uS14 (101 aa).

A disordered region spans residues Arg-53–Gly-72. Residues Arg-61–Pro-70 are compositionally biased toward basic and acidic residues.

Belongs to the universal ribosomal protein uS14 family. In terms of assembly, part of the 30S ribosomal subunit. Contacts proteins S3 and S10.

In terms of biological role, binds 16S rRNA, required for the assembly of 30S particles and may also be responsible for determining the conformation of the 16S rRNA at the A site. In Corynebacterium glutamicum (strain R), this protein is Small ribosomal subunit protein uS14.